A 103-amino-acid polypeptide reads, in one-letter code: Small ribosomal subunit protein uS10 (103 aa).

It belongs to the universal ribosomal protein uS10 family. Part of the 30S ribosomal subunit.

Functionally, involved in the binding of tRNA to the ribosomes. The polypeptide is Small ribosomal subunit protein uS10 (Cellvibrio japonicus (strain Ueda107) (Pseudomonas fluorescens subsp. cellulosa)).